The primary structure comprises 155 residues: Transcriptional repressor NrdR (155 aa).

A zinc finger spans residues 3-34 (CPYCGHLEDRVVDSRETQDGQATRRRRACLSC). The ATP-cone domain occupies 49 to 139 (PQVVKKDGRR…VYRAFRDVGE (91 aa)).

Belongs to the NrdR family. The cofactor is Zn(2+).

Its function is as follows. Negatively regulates transcription of bacterial ribonucleotide reductase nrd genes and operons by binding to NrdR-boxes. The chain is Transcriptional repressor NrdR from Anaeromyxobacter sp. (strain K).